The chain runs to 331 residues: Fructose-1,6-bisphosphatase class 1 2 (331 aa).

4 residues coordinate Mg(2+): glutamate 80, aspartate 98, leucine 100, and aspartate 101. Residues 101–104 (DGSS) and asparagine 189 each bind substrate. Residue glutamate 261 participates in Mg(2+) binding.

Belongs to the FBPase class 1 family. Homotetramer. It depends on Mg(2+) as a cofactor.

It is found in the cytoplasm. The catalysed reaction is beta-D-fructose 1,6-bisphosphate + H2O = beta-D-fructose 6-phosphate + phosphate. The protein operates within carbohydrate biosynthesis; Calvin cycle. The sequence is that of Fructose-1,6-bisphosphatase class 1 2 from Cereibacter sphaeroides (strain ATCC 17023 / DSM 158 / JCM 6121 / CCUG 31486 / LMG 2827 / NBRC 12203 / NCIMB 8253 / ATH 2.4.1.) (Rhodobacter sphaeroides).